The following is a 394-amino-acid chain: Elongation factor Tu (394 aa).

In terms of domain architecture, tr-type G spans 10–204; the sequence is KTHLNVGTIG…TLDTYIEDPV (195 aa). Residues 19–26 form a G1 region; it reads GHVDHGKT. Residue 19–26 participates in GTP binding; sequence GHVDHGKT. Thr26 contacts Mg(2+). The interval 60–64 is G2; it reads GITIK. A G3 region spans residues 81 to 84; that stretch reads DCPG. GTP-binding positions include 81–85 and 136–139; these read DCPGH and NKCD. The G4 stretch occupies residues 136-139; sequence NKCD. The interval 174–176 is G5; that stretch reads SAL.

This sequence belongs to the TRAFAC class translation factor GTPase superfamily. Classic translation factor GTPase family. EF-Tu/EF-1A subfamily. Monomer.

It is found in the cytoplasm. The enzyme catalyses GTP + H2O = GDP + phosphate + H(+). In terms of biological role, GTP hydrolase that promotes the GTP-dependent binding of aminoacyl-tRNA to the A-site of ribosomes during protein biosynthesis. This chain is Elongation factor Tu, found in Aster yellows witches'-broom phytoplasma (strain AYWB).